The sequence spans 425 residues: Probable threonylcarbamoyladenosine tRNA methylthiotransferase (425 aa).

An MTTase N-terminal domain is found at 2–110 (VKIYIENYGC…IIQAVEYALR (109 aa)). [4Fe-4S] cluster is bound by residues cysteine 11, cysteine 47, cysteine 76, cysteine 148, cysteine 152, and cysteine 155. The 231-residue stretch at 133 to 363 (LSPRTVYFIV…HRIRLQISYE (231 aa)) folds into the Radical SAM core domain. A TRAM domain is found at 366-425 (QKYIGKKVEVLIHGEGKKGNVDAVTMNYKHVILPFGNSGEFRIAEIKNATSTYLLGEVMS).

This sequence belongs to the methylthiotransferase family. CDKAL1 subfamily. Requires [4Fe-4S] cluster as cofactor.

It carries out the reaction N(6)-L-threonylcarbamoyladenosine(37) in tRNA + (sulfur carrier)-SH + AH2 + 2 S-adenosyl-L-methionine = 2-methylsulfanyl-N(6)-L-threonylcarbamoyladenosine(37) in tRNA + (sulfur carrier)-H + 5'-deoxyadenosine + L-methionine + A + S-adenosyl-L-homocysteine + 2 H(+). Its function is as follows. Catalyzes the methylthiolation of N6-threonylcarbamoyladenosine (t(6)A), leading to the formation of 2-methylthio-N6-threonylcarbamoyladenosine (ms(2)t(6)A) at position 37 in tRNAs that read codons beginning with adenine. In Pyrococcus abyssi (strain GE5 / Orsay), this protein is Probable threonylcarbamoyladenosine tRNA methylthiotransferase.